Consider the following 765-residue polypeptide: Polyribonucleotide nucleotidyltransferase (765 aa).

Residues Asp-556 and Asp-562 each contribute to the Mg(2+) site. A KH domain is found at 622–681 (PRITKISIPQNKIGEVIGPKGKTINQITEETGANISIEDDGTVFVSAVGGEAAEAAIEKI). Residues 693–762 (GDRFLGTVVK…NRGKISLVPV (70 aa)) form the S1 motif domain.

It belongs to the polyribonucleotide nucleotidyltransferase family. It depends on Mg(2+) as a cofactor.

It is found in the cytoplasm. The enzyme catalyses RNA(n+1) + phosphate = RNA(n) + a ribonucleoside 5'-diphosphate. In terms of biological role, involved in mRNA degradation. Catalyzes the phosphorolysis of single-stranded polyribonucleotides processively in the 3'- to 5'-direction. The protein is Polyribonucleotide nucleotidyltransferase of Corynebacterium urealyticum (strain ATCC 43042 / DSM 7109).